The following is a 344-amino-acid chain: tRNA N6-adenosine threonylcarbamoyltransferase (344 aa).

Histidine 112 and histidine 116 together coordinate Fe cation. Substrate-binding positions include 134–138 (LASGG), aspartate 167, glycine 180, and asparagine 280. Position 308 (aspartate 308) interacts with Fe cation.

It belongs to the KAE1 / TsaD family. Fe(2+) is required as a cofactor.

Its subcellular location is the cytoplasm. It carries out the reaction L-threonylcarbamoyladenylate + adenosine(37) in tRNA = N(6)-L-threonylcarbamoyladenosine(37) in tRNA + AMP + H(+). In terms of biological role, required for the formation of a threonylcarbamoyl group on adenosine at position 37 (t(6)A37) in tRNAs that read codons beginning with adenine. Is involved in the transfer of the threonylcarbamoyl moiety of threonylcarbamoyl-AMP (TC-AMP) to the N6 group of A37, together with TsaE and TsaB. TsaD likely plays a direct catalytic role in this reaction. The chain is tRNA N6-adenosine threonylcarbamoyltransferase from Rickettsia peacockii (strain Rustic).